Here is a 99-residue protein sequence, read N- to C-terminus: Apolipoprotein C-III (99 aa).

The N-terminal stretch at 1–20 (MQPRTLLTVALLALLASARA) is a signal peptide. M63 carries the methionine sulfoxide modification. Positions 68-99 (RFLKGYWSKFTDKFTGFWDSNPEDQPTPAIES) are lipid-binding. An O-linked (GalNAc...) threonine glycan is attached at T94.

Belongs to the apolipoprotein C3 family. The most abundant glycoforms are characterized by an O-linked disaccharide galactose linked to N-acetylgalactosamine (Gal-GalNAc), further modified with up to 3 sialic acid residues. Less abundant glycoforms are characterized by more complex and fucosylated glycan moieties. O-glycosylated on Thr-94 with a core 1 or possibly core 8 glycan.

Its subcellular location is the secreted. In terms of biological role, component of triglyceride-rich very low density lipoproteins (VLDL) and high density lipoproteins (HDL) in plasma. Plays a multifaceted role in triglyceride homeostasis. Intracellularly, promotes hepatic very low density lipoprotein 1 (VLDL1) assembly and secretion; extracellularly, attenuates hydrolysis and clearance of triglyceride-rich lipoproteins (TRLs). Impairs the lipolysis of TRLs by inhibiting lipoprotein lipase and the hepatic uptake of TRLs by remnant receptors. Formed of several curved helices connected via semiflexible hinges, so that it can wrap tightly around the curved micelle surface and easily adapt to the different diameters of its natural binding partners. This Mus musculus (Mouse) protein is Apolipoprotein C-III (Apoc3).